The following is a 103-amino-acid chain: NAD(P)H-quinone oxidoreductase subunit 4L (103 aa).

3 consecutive transmembrane segments (helical) span residues 5–25 (LQYCLILAAALFCIGIYGLIT), 32–52 (VLMSIELLLNAVNLNLMGFSN), and 66–86 (IFVITIAAAEAAVGLAIVLAI).

This sequence belongs to the complex I subunit 4L family. As to quaternary structure, NDH-1 can be composed of about 15 different subunits; different subcomplexes with different compositions have been identified which probably have different functions.

It localises to the cellular thylakoid membrane. It carries out the reaction a plastoquinone + NADH + (n+1) H(+)(in) = a plastoquinol + NAD(+) + n H(+)(out). The catalysed reaction is a plastoquinone + NADPH + (n+1) H(+)(in) = a plastoquinol + NADP(+) + n H(+)(out). Its function is as follows. NDH-1 shuttles electrons from an unknown electron donor, via FMN and iron-sulfur (Fe-S) centers, to quinones in the respiratory and/or the photosynthetic chain. The immediate electron acceptor for the enzyme in this species is believed to be plastoquinone. Couples the redox reaction to proton translocation, and thus conserves the redox energy in a proton gradient. Cyanobacterial NDH-1 also plays a role in inorganic carbon-concentration. This is NAD(P)H-quinone oxidoreductase subunit 4L from Synechocystis sp. (strain ATCC 27184 / PCC 6803 / Kazusa).